The sequence spans 435 residues: D-inositol 3-phosphate glycosyltransferase (435 aa).

Residue His-16 coordinates 1D-myo-inositol 3-phosphate. UDP-N-acetyl-alpha-D-glucosamine contacts are provided by residues 22–23 (QP) and Gly-30. 1D-myo-inositol 3-phosphate is bound by residues 27-32 (DAGGMN), Lys-85, Tyr-118, Thr-142, and Arg-162. Residues Arg-237, Lys-242, and Val-303 each coordinate UDP-N-acetyl-alpha-D-glucosamine. 3 residues coordinate Mg(2+): Tyr-312, Arg-313, and Ala-315. Residues Glu-325 and Glu-333 each contribute to the UDP-N-acetyl-alpha-D-glucosamine site. Mg(2+) is bound at residue Thr-339.

It belongs to the glycosyltransferase group 1 family. MshA subfamily. As to quaternary structure, homodimer.

The catalysed reaction is 1D-myo-inositol 3-phosphate + UDP-N-acetyl-alpha-D-glucosamine = 1D-myo-inositol 2-acetamido-2-deoxy-alpha-D-glucopyranoside 3-phosphate + UDP + H(+). Its function is as follows. Catalyzes the transfer of a N-acetyl-glucosamine moiety to 1D-myo-inositol 3-phosphate to produce 1D-myo-inositol 2-acetamido-2-deoxy-glucopyranoside 3-phosphate in the mycothiol biosynthesis pathway. The chain is D-inositol 3-phosphate glycosyltransferase from Kineococcus radiotolerans (strain ATCC BAA-149 / DSM 14245 / SRS30216).